Reading from the N-terminus, the 99-residue chain is Putative type 4B encapsulin shell protein PF1875 (99 aa).

This sequence belongs to the encapsulin family. Family 4B subfamily. May self-assemble into facets and potentially into larger complexes.

The protein localises to the encapsulin nanocompartment. Its function is as follows. May be the encapsulin shell protein in a type 4 A-domain encapsulin nanocompartment system. Its cargo may be upstream glyceraldehyde-3-phosphate dehydrogenase (AC P61879). This Pyrococcus furiosus (strain ATCC 43587 / DSM 3638 / JCM 8422 / Vc1) protein is Putative type 4B encapsulin shell protein PF1875.